Here is a 202-residue protein sequence, read N- to C-terminus: Transcription factor IBH1 (202 aa).

Residues 1–16 (MDAKRTPPPPTPPNPN) show a composition bias toward pro residues. The tract at residues 1 to 33 (MDAKRTPPPPTPPNPNPSVIGSGAAADGGGFGR) is disordered. A bHLH domain is found at 136-185 (TSAAARAVPPPPRQQGEPPRADALRRLVPGGAGMEYSSLLEETADYLRSL).

Belongs to the bHLH protein family. In terms of assembly, interacts with ILI1.

Atypical and probable non DNA-binding bHLH transcription factor that acts as a negative regulator of cell elongation and plant development. Binds the transcription factor ILI1 and forms a heterodimer of antagonistic bHLH transcription factors that function downstream of BZR1 to mediate brassinosteroid regulation of cell elongation and lamina inclination. The protein is Transcription factor IBH1 (IBH1) of Oryza sativa subsp. indica (Rice).